The primary structure comprises 74 residues: ATP synthase subunit 9, mitochondrial (74 aa).

2 helical membrane-spanning segments follow: residues 16–36 (GLIGAGVGIGVVFGALILGVA) and 50–70 (ILGFAFSEATGLFALMMAFLL).

Belongs to the ATPase C chain family. F-type ATPases have 2 components, CF(1) - the catalytic core - and CF(0) - the membrane proton channel. CF(1) has five subunits: alpha(3), beta(3), gamma(1), delta(1), epsilon(1). CF(0) has three main subunits: a, b and c.

It localises to the mitochondrion membrane. In terms of biological role, mitochondrial membrane ATP synthase (F(1)F(0) ATP synthase or Complex V) produces ATP from ADP in the presence of a proton gradient across the membrane which is generated by electron transport complexes of the respiratory chain. F-type ATPases consist of two structural domains, F(1) - containing the extramembraneous catalytic core and F(0) - containing the membrane proton channel, linked together by a central stalk and a peripheral stalk. During catalysis, ATP synthesis in the catalytic domain of F(1) is coupled via a rotary mechanism of the central stalk subunits to proton translocation. Part of the complex F(0) domain. A homomeric c-ring of probably 10 subunits is part of the complex rotary element. This Trichophyton rubrum (Athlete's foot fungus) protein is ATP synthase subunit 9, mitochondrial (ATP9).